The chain runs to 371 residues: tRNA (guanine(26)-N(2))-dimethyltransferase (371 aa).

The 365-residue stretch at 4–368 (IEVTEGRTTF…APLDAIAAAL (365 aa)) folds into the Trm1 methyltransferase domain. S-adenosyl-L-methionine contacts are provided by Arg-41, Arg-66, Asp-82, Asp-108, and Ala-109. Residues Cys-237, Cys-240, Cys-256, and Cys-259 each contribute to the Zn(2+) site.

Belongs to the class I-like SAM-binding methyltransferase superfamily. Trm1 family.

It catalyses the reaction guanosine(26) in tRNA + 2 S-adenosyl-L-methionine = N(2)-dimethylguanosine(26) in tRNA + 2 S-adenosyl-L-homocysteine + 2 H(+). Its function is as follows. Dimethylates a single guanine residue at position 26 of a number of tRNAs using S-adenosyl-L-methionine as donor of the methyl groups. The protein is tRNA (guanine(26)-N(2))-dimethyltransferase of Methanosphaerula palustris (strain ATCC BAA-1556 / DSM 19958 / E1-9c).